The following is a 359-amino-acid chain: MAPPAVLSKSGVIYGKDVKDLFDYAQEKGFAIPAINVTSSSTVVAALEAARDNKAPIILQTSQGGAAYFAGKGVDNKDQAASIAGSIAAAHYIRAIAPTYGIPVVLHTDHCAKKLLPWFDGMLKADEEFFAKTGTPLFSSHMLDLSEETDDENIATCAKYFERMAKMGQWLEMEIGITGGEEDGVNNEHVEKDALYTSPETVFAVYESLHKISPNFSIAAAFGNVHGVYKPGNVQLRPEILGDHQVYAKKQIGTDAKHPLYLVFHGGSGSTQEEFNTAIKNGVVKVNLDTDCQYAYLTGIRDYVTNKIEYLKAPVGNPEGADKPNKKYFDPRVWVREGEKTMSKRIAEALDIFHTKGQL.

Position 62 (Ser-62) interacts with D-glyceraldehyde 3-phosphate. The active-site Proton donor is the Asp-109. The Zn(2+) site is built by His-110, Asp-144, Glu-174, and His-226. Gly-227 serves as a coordination point for dihydroxyacetone phosphate. Zn(2+) is bound at residue His-265. Dihydroxyacetone phosphate is bound by residues Gly-266–Ser-268 and Asn-287–Thr-290.

The protein belongs to the class II fructose-bisphosphate aldolase family. In terms of assembly, homodimer. Requires Zn(2+) as cofactor.

Its subcellular location is the cytoplasm. The catalysed reaction is beta-D-fructose 1,6-bisphosphate = D-glyceraldehyde 3-phosphate + dihydroxyacetone phosphate. Its pathway is carbohydrate degradation; glycolysis; D-glyceraldehyde 3-phosphate and glycerone phosphate from D-glucose: step 4/4. Its function is as follows. Catalyzes the aldol condensation of dihydroxyacetone phosphate (DHAP or glycerone-phosphate) with glyceraldehyde 3-phosphate (G3P) to form fructose 1,6-bisphosphate (FBP) in gluconeogenesis and the reverse reaction in glycolysis. The polypeptide is Fructose-bisphosphate aldolase (FBA1) (Candida albicans (strain SC5314 / ATCC MYA-2876) (Yeast)).